Here is a 206-residue protein sequence, read N- to C-terminus: MDLLIKTLDGNEVGKLKVSESVFGLVPREDILQRVVRWQLARRQQGTHQSQGRSDVSRTGAKMFKQKGTGRARHSSARAPQFRGGGKAHGPVVRSHAHTLPKKIRALGLRFALSAKLKADDLIVVDEFNVKDAKTRMLVSCFSKLGFDNALLIGGNEVDLNFSRATSNIPNIDILPIQGINVYDILRRSKLVLSKAAVEVLEERFK.

The span at 42-54 (RRQQGTHQSQGRS) shows a compositional bias: polar residues. The interval 42-93 (RRQQGTHQSQGRSDVSRTGAKMFKQKGTGRARHSSARAPQFRGGGKAHGPVV) is disordered. A compositionally biased stretch (basic residues) spans 64 to 76 (FKQKGTGRARHSS).

This sequence belongs to the universal ribosomal protein uL4 family. As to quaternary structure, part of the 50S ribosomal subunit.

One of the primary rRNA binding proteins, this protein initially binds near the 5'-end of the 23S rRNA. It is important during the early stages of 50S assembly. It makes multiple contacts with different domains of the 23S rRNA in the assembled 50S subunit and ribosome. Functionally, forms part of the polypeptide exit tunnel. The chain is Large ribosomal subunit protein uL4 from Bartonella henselae (strain ATCC 49882 / DSM 28221 / CCUG 30454 / Houston 1) (Rochalimaea henselae).